The sequence spans 158 residues: Phosphopantetheine adenylyltransferase (158 aa).

T9 lines the substrate pocket. ATP contacts are provided by residues 9–10 (TF) and H17. Positions 41, 73, and 87 each coordinate substrate. ATP contacts are provided by residues 88 to 90 (GVR), E98, and 123 to 129 (WSYVSST).

This sequence belongs to the bacterial CoaD family. Homohexamer. Mg(2+) is required as a cofactor.

It localises to the cytoplasm. It catalyses the reaction (R)-4'-phosphopantetheine + ATP + H(+) = 3'-dephospho-CoA + diphosphate. Its pathway is cofactor biosynthesis; coenzyme A biosynthesis; CoA from (R)-pantothenate: step 4/5. Its function is as follows. Reversibly transfers an adenylyl group from ATP to 4'-phosphopantetheine, yielding dephospho-CoA (dPCoA) and pyrophosphate. The protein is Phosphopantetheine adenylyltransferase of Histophilus somni (strain 129Pt) (Haemophilus somnus).